The following is a 201-amino-acid chain: Fimbrial protein FimX (201 aa).

An N-terminal signal peptide occupies residues 1–21 (MQAKTFLLGAALAGVALAAHA). An intrachain disulfide couples C37 to C79.

The protein belongs to the fimbrial protein family.

The protein localises to the fimbrium. Functionally, bordetella pertussis is the causative agent of whooping cough. An essential step in the disease process is the attachment of the bacteria to the ciliated epithelium of the respiratory tract, enabling the organism to resist normal host-clearance mechanisms. It is unclear which bacterial cell surface component are responsible for adherence but the fimbriae of B.pertussis are prime candidates for being involved in this process. In Bordetella pertussis (strain Tohama I / ATCC BAA-589 / NCTC 13251), this protein is Fimbrial protein FimX (fimX).